The primary structure comprises 61 residues: Lens epithelial cell protein LEP503 (61 aa).

The polypeptide is Lens epithelial cell protein LEP503 (Lenep) (Mus musculus (Mouse)).